The primary structure comprises 311 residues: Pyrimidine-specific ribonucleoside hydrolase RihA (311 aa).

Histidine 240 is a catalytic residue.

It belongs to the IUNH family. RihA subfamily.

Its function is as follows. Hydrolyzes with equal efficiency cytidine or uridine to ribose and cytosine or uracil, respectively. This chain is Pyrimidine-specific ribonucleoside hydrolase RihA, found in Escherichia coli O127:H6 (strain E2348/69 / EPEC).